A 532-amino-acid chain; its full sequence is MNCLPDELLVQILSFLPTKEATSTSLLSKRWRTLFTLSPNLDFDNSLLLQSKKRKWNMRNIQKSFVGFVDSTLALQGGKGIKSFSLKFKETLGDVNGEVDVNRWICNALEHGVSELHLRIDYTKRCHLPSEIFTSTKLVKLSLVTQSCFPVVPNCISLPSLKVLFLDSIWFEVPQFLIFLTACPALEDLTIYQKPHSVGMPYHISSKTIKRLSVTYTCGYFVDYGLKLFNTPSVVDLYYSDYVRHKYPHMNLDSLPKATLDIHFLDDNAANVTELLSGIRNVKTLHLTSSTVKVILLCCKGEIPMFENLINLKFSGKTRQWKFLLPLLLEICPNLTTLVLSGLDQNWFVGFRTPPNNQVKMLSIMQYQGSERELKLISYFVLKMECLQVVKVYVSSPMNDLKKMQLTEDLLKLPKASPKLNIQVLVPSDTYLPALKVLFLDSVWFDFHQFANVFFPACPALEDFAIHIKSFRRKARSENELEHISHFSLKMEFLEVLKVYVALTMDDTKKVELTKELLKLPISSSKLIIQVM.

One can recognise an F-box domain in the interval 1 to 46 (MNCLPDELLVQILSFLPTKEATSTSLLSKRWRTLFTLSPNLDFDNS). 3 LRR repeats span residues 113-135 (VSELHLRIDYTKRCHLPSEIFTS), 279-305 (IRNVKTLHLTSSTVKVILLCCKGEIPM), and 398-420 (MNDLKKMQLTEDLLKLPKASPKL).

This chain is Putative F-box/LRR-repeat protein At3g42770, found in Arabidopsis thaliana (Mouse-ear cress).